Consider the following 154-residue polypeptide: MTEINGNLSAEGLNFCIVVGRFNDLITNKLLEGAIDCIVRHGGSEDNITVVRVPGSFEIPLIAKKVAKTGKYDAVICLGAVIRGSTPHFEYVAAEVTKGIALVSLETEIPVSYGILTTDTIEQAVERAGTKMGNKGFDAALSAIEMANLIKEIR.

5-amino-6-(D-ribitylamino)uracil is bound by residues Phe-22, 56 to 58 (SFE), and 80 to 82 (AVI). Residue 85-86 (ST) coordinates (2S)-2-hydroxy-3-oxobutyl phosphate. The active-site Proton donor is the His-88. Tyr-113 serves as a coordination point for 5-amino-6-(D-ribitylamino)uracil. Arg-127 contributes to the (2S)-2-hydroxy-3-oxobutyl phosphate binding site.

It belongs to the DMRL synthase family. In terms of assembly, forms an icosahedral capsid composed of 60 subunits, arranged as a dodecamer of pentamers.

The enzyme catalyses (2S)-2-hydroxy-3-oxobutyl phosphate + 5-amino-6-(D-ribitylamino)uracil = 6,7-dimethyl-8-(1-D-ribityl)lumazine + phosphate + 2 H2O + H(+). Its pathway is cofactor biosynthesis; riboflavin biosynthesis; riboflavin from 2-hydroxy-3-oxobutyl phosphate and 5-amino-6-(D-ribitylamino)uracil: step 1/2. Its function is as follows. Catalyzes the formation of 6,7-dimethyl-8-ribityllumazine by condensation of 5-amino-6-(D-ribitylamino)uracil with 3,4-dihydroxy-2-butanone 4-phosphate. This is the penultimate step in the biosynthesis of riboflavin. The polypeptide is 6,7-dimethyl-8-ribityllumazine synthase (Persephonella marina (strain DSM 14350 / EX-H1)).